The primary structure comprises 48 residues: uncharacterized protein (48 aa).

It belongs to the ELIP/psbS family.

It is found in the plastid. The protein localises to the chloroplast. In terms of biological role, possible role in chlorophyll and/or carotenoid binding. This is an uncharacterized protein from Pyropia yezoensis (Susabi-nori).